We begin with the raw amino-acid sequence, 4540 residues long: Dynein heavy chain, cytoplasmic (4540 aa).

A stem region spans residues 1–1796 (MEESETQLNV…LIQMGNAQFH (1796 aa)). Coiled coils occupy residues 440 to 482 (EHIK…NVQQ), 698 to 722 (RVNY…KTKV), 794 to 827 (VKKF…AMKT), 975 to 995 (QQLI…MEQY), 1169 to 1251 (RSKK…LKMD), and 1295 to 1311 (QNKK…KQLN). AAA regions lie at residues 1797–2018 (YGFE…VLNS), 2091–2348 (KELA…FTRI), 2457–2705 (EIDP…WKYA), and 2796–3056 (QFNE…AKRF). ATP is bound by residues 1835-1842 (GPAGTGKT), 2129-2136 (GPCGCGKS), 2496-2503 (GPPGSGKT), and 2834-2841 (GSSGVGKT). 4 coiled-coil regions span residues 3076-3182 (NEKK…NAKQ), 3289-3367 (QLKY…RSQA), 3653-3688 (EDEK…VMNT), and 3820-3851 (QQLK…RWLN). The interval 3076–3367 (NEKKSQLEDQ…VQEKVTRSQA (292 aa)) is stalk. A disordered region spans residues 3140–3159 (KKKEDSTRLSSDAEKKAKEM). Residues 3444 to 3673 (LSRPSDRLNW…LKKEAAVIVQ (230 aa)) are AAA 5. An AAA 6 region spans residues 3908–4123 (ARKLINQILG…QRCSLDLIDE (216 aa)). Coiled coils occupy residues 4238-4259 (QKLI…TQIE) and 4313-4342 (RFLD…LAQG).

Belongs to the dynein heavy chain family. In terms of assembly, consists of at least two heavy chains and a number of intermediate and light chains.

It is found in the cytoplasm. Its subcellular location is the cytoskeleton. Its function is as follows. Cytoplasmic dynein acts as a motor for the intracellular retrograde motility of vesicles and organelles along microtubules. Dynein has ATPase activity; the force-producing power stroke is thought to occur on release of ADP. This is Dynein heavy chain, cytoplasmic (DHC-8) from Paramecium tetraurelia.